The chain runs to 754 residues: Deadenylation-dependent mRNA-decapping factor pdc2 (754 aa).

The interval 499-754 (LESIWKALYI…MGLDARQLSA (256 aa)) is interaction with lsm1.

The protein belongs to the PAT1 family. As to quaternary structure, interacts with dcp2. Interacts with lsm1; via C-terminus.

The protein resides in the cytoplasm. Its subcellular location is the nucleus. It localises to the P-body. Functionally, activator of decapping that functions as a general and active mechanism of translational repression and required for P-body formation. Stabilizes the 3' terminus of mRNAs and modulates the rates of mRNA-decapping that occur following deadenylation. Might be required for promoting the formation or the stabilization of the preinitiation translation complexes. Necessary for accurate chromosome transmission during cell division. Together with lsm1, recruits the deadenylase ccr4 to P-bodies. The protein is Deadenylation-dependent mRNA-decapping factor pdc2 of Schizosaccharomyces pombe (strain 972 / ATCC 24843) (Fission yeast).